Consider the following 85-residue polypeptide: MENLIGYVAAFLTTVSFLPQVLRVVMTKQTRDISRNMYIMFFLGVVLWFVYGILRSDLPIILANVVTLFFVTIILYYKLTEGNQT.

Residues 2–59 (ENLIGYVAAFLTTVSFLPQVLRVVMTKQTRDISRNMYIMFFLGVVLWFVYGILRSDLP) enclose the PQ-loop domain. Transmembrane regions (helical) follow at residues 5–25 (IGYV…LRVV), 33–53 (ISRN…VYGI), and 57–77 (DLPI…ILYY).

In terms of assembly, homodimer.

The protein localises to the cell membrane. In terms of biological role, the homodimer mediates transmembrane sugar transport down a concentration gradient. Transport is probably effected by rocking-type movements, where a cargo-binding cavity opens first on one and then on the other side of the membrane. The polypeptide is Sugar transporter SemiSWEET (Leptospira biflexa serovar Patoc (strain Patoc 1 / ATCC 23582 / Paris)).